We begin with the raw amino-acid sequence, 257 residues long: Acetylglutamate kinase (257 aa).

Substrate-binding positions include 43-44 (GG), Arg-65, and Asn-157. Residues 180 to 185 (DISSIL) and 208 to 210 (IIT) contribute to the ATP site.

This sequence belongs to the acetylglutamate kinase family. ArgB subfamily. As to quaternary structure, homodimer.

The protein localises to the cytoplasm. The catalysed reaction is N-acetyl-L-glutamate + ATP = N-acetyl-L-glutamyl 5-phosphate + ADP. The protein operates within amino-acid biosynthesis; L-arginine biosynthesis; N(2)-acetyl-L-ornithine from L-glutamate: step 2/4. Catalyzes the ATP-dependent phosphorylation of N-acetyl-L-glutamate. In Buchnera aphidicola subsp. Acyrthosiphon pisum (strain Tuc7), this protein is Acetylglutamate kinase.